The sequence spans 156 residues: Small ribosomal subunit protein uS7cz/uS7cy (156 aa).

It belongs to the universal ribosomal protein uS7 family. In terms of assembly, part of the 30S ribosomal subunit.

It is found in the plastid. Its subcellular location is the chloroplast. In terms of biological role, one of the primary rRNA binding proteins, it binds directly to 16S rRNA where it nucleates assembly of the head domain of the 30S subunit. The chain is Small ribosomal subunit protein uS7cz/uS7cy (rps7-A) from Triticum aestivum (Wheat).